The primary structure comprises 268 residues: Phosphatidylglycerol--prolipoprotein diacylglyceryl transferase (268 aa).

The next 7 membrane-spanning stretches (helical) occupy residues 27-47 (PALR…MWLL), 66-86 (LLFY…VLFY), 104-124 (GGMS…YITW), 130-150 (FFAV…AGRI), 181-201 (PSQL…LYWF), 208-228 (VGAV…IVET), and 242-262 (LMTM…YLIL). Residue R149 participates in a 1,2-diacyl-sn-glycero-3-phospho-(1'-sn-glycerol) binding.

Belongs to the Lgt family.

The protein resides in the cell inner membrane. The catalysed reaction is L-cysteinyl-[prolipoprotein] + a 1,2-diacyl-sn-glycero-3-phospho-(1'-sn-glycerol) = an S-1,2-diacyl-sn-glyceryl-L-cysteinyl-[prolipoprotein] + sn-glycerol 1-phosphate + H(+). Its pathway is protein modification; lipoprotein biosynthesis (diacylglyceryl transfer). Catalyzes the transfer of the diacylglyceryl group from phosphatidylglycerol to the sulfhydryl group of the N-terminal cysteine of a prolipoprotein, the first step in the formation of mature lipoproteins. This Shewanella oneidensis (strain ATCC 700550 / JCM 31522 / CIP 106686 / LMG 19005 / NCIMB 14063 / MR-1) protein is Phosphatidylglycerol--prolipoprotein diacylglyceryl transferase.